The chain runs to 149 residues: uncharacterized protein (149 aa).

The disordered stretch occupies residues 34-94 (HTPCLPKVPR…NPIGSQRIHS (61 aa)). A compositionally biased stretch (basic and acidic residues) spans 56–66 (QSPHRQGDRRR).

It is found in the mitochondrion. This is an uncharacterized protein from Arabidopsis thaliana (Mouse-ear cress).